The following is a 932-amino-acid chain: Myelin gene regulatory factor-like A (932 aa).

2 stretches are compositionally biased toward low complexity: residues 1-19 and 33-48; these read MDGY…QQHQ and QQQQ…QQQQ. 7 disordered regions span residues 1–63, 152–256, 269–328, 540–568, 582–601, 613–660, and 680–726; these read MDGY…ISNG, VNSP…LSSS, TNTQ…NENP, VTPP…SNNM, TMNI…LSQL, TQNH…NNNN, and NINN…CHWN. The segment covering 49-59 has biased composition (polar residues); sequence PMNGSNNQLLG. A coiled-coil region spans residues 127-154; it reads LDSSFLMLQQQLQDQQQQIAQFNSSVNS. Low complexity-rich tracts occupy residues 152 to 249 and 277 to 294; these read VNSP…ANNT and PRSI…TNSP. A DNA-binding region (NDT80) is located at residues 286–546; the sequence is PNLSPTNSPI…ATQVTPPGDL (261 aa). Positions 311-328 are enriched in polar residues; it reads ENENSDPPSPMTQYNENP. Low complexity-rich tracts occupy residues 615–660 and 680–721; these read NHNN…NNNN and NINN…NNNN. Residues 767–877 enclose the Peptidase S74 domain; the sequence is SDLRIKYDLK…KQMDEMKLKL (111 aa). Residues 863–895 adopt a coiled-coil conformation; that stretch reads TQELSKQMDEMKLKLITYESKLKNLKKKSKNQT. The helical transmembrane segment at 895-915 threads the bilayer; it reads TILLIIFMITFLLVALYMYKP.

The protein resides in the membrane. Its function is as follows. Transcription factor which acts as a key regulator of pstA (prestalk-A) cells differentiation. Essential for ecmA-specific gene expression. This Dictyostelium discoideum (Social amoeba) protein is Myelin gene regulatory factor-like A (mrfA).